The chain runs to 258 residues: MDELVIAGRSFSSRLMVGTGKFASNSLMADALAASGSQIVTVALRRVDIDRPEDDLLAHIDRDKYLLLPNTSGARDAEEAVRLARLARAAGCEPWVKLEVTPDPYYLLPDPIETLKAAEILVKEGFVVLPYINADPVLAKHLQEAGTATVMPLGAPIGTNKGVRTRDNIAIIIEQAIVPVVVDAGLGAPSHVAEAMEMGADAVLVNTALAVTPDPAGMAHAFRLGVEAGRRAFLAGLPAQQQKAEASSPLTGFLRDEQ.

Lys-97 serves as the catalytic Schiff-base intermediate with DXP. Residues Gly-158, 184 to 185, and 206 to 207 contribute to the 1-deoxy-D-xylulose 5-phosphate site; these read AG and NT.

This sequence belongs to the ThiG family. In terms of assembly, homotetramer. Forms heterodimers with either ThiH or ThiS.

It is found in the cytoplasm. The catalysed reaction is [ThiS sulfur-carrier protein]-C-terminal-Gly-aminoethanethioate + 2-iminoacetate + 1-deoxy-D-xylulose 5-phosphate = [ThiS sulfur-carrier protein]-C-terminal Gly-Gly + 2-[(2R,5Z)-2-carboxy-4-methylthiazol-5(2H)-ylidene]ethyl phosphate + 2 H2O + H(+). Its pathway is cofactor biosynthesis; thiamine diphosphate biosynthesis. In terms of biological role, catalyzes the rearrangement of 1-deoxy-D-xylulose 5-phosphate (DXP) to produce the thiazole phosphate moiety of thiamine. Sulfur is provided by the thiocarboxylate moiety of the carrier protein ThiS. In vitro, sulfur can be provided by H(2)S. The chain is Thiazole synthase 2 from Syntrophotalea carbinolica (strain DSM 2380 / NBRC 103641 / GraBd1) (Pelobacter carbinolicus).